The primary structure comprises 206 residues: Molybdopterin synthase catalytic subunit (206 aa).

Positions M1–A23 are enriched in polar residues. A disordered region spans residues M1–E27. Substrate contacts are provided by residues H131–R132, K147, and K154–E156. Residues K177–V188 show a composition bias toward basic and acidic residues. The tract at residues K177 to S206 is disordered. Gly residues predominate over residues S197–S206.

It belongs to the MoaE family. MOCS2B subfamily. In terms of assembly, heterotetramer; composed of 2 small (MOCS2A) and 2 large (MOCS2B) subunits.

It localises to the cytoplasm. It catalyses the reaction 2 [molybdopterin-synthase sulfur-carrier protein]-C-terminal-Gly-aminoethanethioate + cyclic pyranopterin phosphate + H2O = molybdopterin + 2 [molybdopterin-synthase sulfur-carrier protein]-C-terminal Gly-Gly + 2 H(+). It functions in the pathway cofactor biosynthesis; molybdopterin biosynthesis. Catalytic subunit of the molybdopterin synthase complex, a complex that catalyzes the conversion of precursor Z into molybdopterin. Acts by mediating the incorporation of 2 sulfur atoms from thiocarboxylated MOCS2A into precursor Z to generate a dithiolene group. In Neurospora crassa (strain ATCC 24698 / 74-OR23-1A / CBS 708.71 / DSM 1257 / FGSC 987), this protein is Molybdopterin synthase catalytic subunit (nit-8).